The following is a 620-amino-acid chain: Glutathione-regulated potassium-efflux system protein KefC (620 aa).

The next 12 membrane-spanning stretches (helical) occupy residues 4–24 (HTLI…PIAV), 26–46 (LGLG…PWGL), 54–74 (SILH…GLEL), 90–110 (GALQ…LLGL), 114–134 (VAEL…MQAM), 149–169 (FAVL…IPLL), 178–198 (MGAF…VVLL), 218–238 (VFSA…EEVG), 270–290 (GLLL…GTLI), 294–314 (LRIV…LWLI), 327–347 (WFAV…GAAQ), and 359–379 (SLTL…VILN). In terms of domain architecture, RCK N-terminal spans 399–518 (QPRVIIAGFG…AGVEKPERET (120 aa)). The interval 597-620 (GWQGTEEGKHTGNMADEPETKPSS) is disordered.

Belongs to the monovalent cation:proton antiporter 2 (CPA2) transporter (TC 2.A.37) family. KefC subfamily. Homodimer. Interacts with the regulatory subunit KefF.

It is found in the cell inner membrane. Functionally, pore-forming subunit of a potassium efflux system that confers protection against electrophiles. Catalyzes K(+)/H(+) antiport. The polypeptide is Glutathione-regulated potassium-efflux system protein KefC (Escherichia coli O45:K1 (strain S88 / ExPEC)).